Consider the following 185-residue polypeptide: Ribosome-recycling factor (185 aa).

It belongs to the RRF family.

It is found in the cytoplasm. Responsible for the release of ribosomes from messenger RNA at the termination of protein biosynthesis. May increase the efficiency of translation by recycling ribosomes from one round of translation to another. The chain is Ribosome-recycling factor from Syntrophus aciditrophicus (strain SB).